We begin with the raw amino-acid sequence, 194 residues long: WASH complex subunit 3 (194 aa).

Met-1 is modified (N-acetylmethionine). Positions Thr-46 to Ser-74 form a coiled coil. 2 disordered regions span residues Ser-93–Glu-121 and Glu-159–Asp-194. Positions Thr-103 to Glu-121 are enriched in polar residues.

This sequence belongs to the CCDC53 family. As to quaternary structure, component of the WASH core complex also described as WASH regulatory complex (SHRC) composed of WASH (WASHC1, WASH2P or WASH3P), WASHC2 (WASHC2A or WASHC2C), WASHC3, WASHC4 and WASHC5. The WASH core complex associates via WASHC2 with the F-actin-capping protein dimer (formed by CAPZA1, CAPZA2 or CAPZA3 and CAPZB) in a transient or substoichiometric manner which was initially described as WASH complex.

The protein resides in the early endosome. Functionally, acts as a component of the WASH core complex that functions as a nucleation-promoting factor (NPF) at the surface of endosomes, where it recruits and activates the Arp2/3 complex to induce actin polymerization, playing a key role in the fission of tubules that serve as transport intermediates during endosome sorting. The polypeptide is WASH complex subunit 3 (Homo sapiens (Human)).